A 78-amino-acid polypeptide reads, in one-letter code: DNA-Binding protein G5P (78 aa).

It belongs to the inovirus G5P protein family. In terms of assembly, homodimer.

Binds to DNA in a highly cooperative manner without pronounced sequence specificity. During synthesis of the single-stranded (progeny) viral DNA, prevents the conversion into the double-stranded replicative form. G5P is displaced by the capsid protein G8P during phage assembly on the inner bacterial membrane. This Pseudomonas aeruginosa (Bacteriophage Pf3) protein is DNA-Binding protein G5P (V).